The following is a 537-amino-acid chain: CTP synthase (537 aa).

Positions 1 to 267 are amidoligase domain; sequence MAKYIFVTGG…DEYVIKRLNL (267 aa). A CTP-binding site is contributed by serine 13. Serine 13 contacts UTP. 14–19 is a binding site for ATP; sequence SLGKGI. Tyrosine 54 is an L-glutamine binding site. Residue aspartate 71 participates in ATP binding. Mg(2+)-binding residues include aspartate 71 and glutamate 141. Residues 148–150, 188–193, and lysine 224 each bind CTP; these read DIE and KTKPTQ. Residues 188 to 193 and lysine 224 each bind UTP; that span reads KTKPTQ. 240 to 242 contacts ATP; that stretch reads RDV. The Glutamine amidotransferase type-1 domain maps to 292 to 534; the sequence is EVALVGKYVD…VKAMLNLKIN (243 aa). Glycine 354 lines the L-glutamine pocket. Cysteine 381 functions as the Nucleophile; for glutamine hydrolysis in the catalytic mechanism. Residues 382–385, glutamate 405, and arginine 462 contribute to the L-glutamine site; that span reads LGMQ. Active-site residues include histidine 507 and glutamate 509.

Belongs to the CTP synthase family. As to quaternary structure, homotetramer.

The catalysed reaction is UTP + L-glutamine + ATP + H2O = CTP + L-glutamate + ADP + phosphate + 2 H(+). It catalyses the reaction L-glutamine + H2O = L-glutamate + NH4(+). It carries out the reaction UTP + NH4(+) + ATP = CTP + ADP + phosphate + 2 H(+). It functions in the pathway pyrimidine metabolism; CTP biosynthesis via de novo pathway; CTP from UDP: step 2/2. Its activity is regulated as follows. Allosterically activated by GTP, when glutamine is the substrate; GTP has no effect on the reaction when ammonia is the substrate. The allosteric effector GTP functions by stabilizing the protein conformation that binds the tetrahedral intermediate(s) formed during glutamine hydrolysis. Inhibited by the product CTP, via allosteric rather than competitive inhibition. Its function is as follows. Catalyzes the ATP-dependent amination of UTP to CTP with either L-glutamine or ammonia as the source of nitrogen. Regulates intracellular CTP levels through interactions with the four ribonucleotide triphosphates. This Caldanaerobacter subterraneus subsp. tengcongensis (strain DSM 15242 / JCM 11007 / NBRC 100824 / MB4) (Thermoanaerobacter tengcongensis) protein is CTP synthase.